A 1021-amino-acid chain; its full sequence is Ras-related protein Rab-44 (1021 aa).

The disordered stretch occupies residues 1–40 (METGQRTSRKVRKLGSNRRRQTREPADGEGAAVAPEPESW). Residues 7–21 (TSRKVRKLGSNRRRQ) are compositionally biased toward basic residues. The EF-hand domain occupies 77–112 (GSKEESEMIFDWVDVERKGHLSLEEFSSGLKNIFGS). Residues 113–133 (SQSPHRLRRRKPLPSKRVSAT) form a disordered region. A compositionally biased stretch (basic residues) spans 117 to 126 (HRLRRRKPLP). The stretch at 191–315 (LAKMTSRLQE…AGRLEEVRGQ (125 aa)) forms a coiled coil. 3 disordered regions span residues 339 to 405 (SFPG…QTPR), 419 to 483 (LFGQ…LLWG), and 495 to 827 (VLIP…GGPQ). The segment covering 443–467 (KDNKGVDPHEQDIRAEQPVEPHDPD) has biased composition (basic and acidic residues). Pro residues predominate over residues 501–514 (DGPPPPANSPPPQA). A compositionally biased stretch (low complexity) spans 532–559 (PGSWAPPSGAQPGAGAGPQEPTQTPPTM). The span at 676–685 (SEEGKQEGRG) shows a compositional bias: basic and acidic residues. Polar residues-rich tracts occupy residues 688 to 697 (DLSSEQSEQS) and 710 to 727 (LPQQ…TPQA). Residues 736 to 759 (PGKSAPPRGSPPRGAQPGAGAGPQ) are compositionally biased toward low complexity. The span at 783–810 (HAEEQGPPHSREPRAESRLEDPGMDSRE) shows a compositional bias: basic and acidic residues. Residues 840–847 (GDSNVGKT), 888–892 (DTAGQ), and 946–949 (NKMD) each bind GTP. S-geranylgeranyl cysteine attachment occurs at residues Cys1019 and Cys1020.

It belongs to the small GTPase superfamily. Rab family.

The protein localises to the cell membrane. The chain is Ras-related protein Rab-44 (RAB44) from Homo sapiens (Human).